Reading from the N-terminus, the 109-residue chain is uncharacterized protein (109 aa).

Positions 1–26 (MTPRSLPRYGNSSRRKSFPMHRPSNV) are disordered.

This is an uncharacterized protein from Mycobacterium bovis (strain ATCC BAA-935 / AF2122/97).